A 616-amino-acid chain; its full sequence is Vitamin B12 transporter BtuB (616 aa).

The first 20 residues, 1 to 20 (MIKKISLLTALSVTAFSGWA), serve as a signal peptide directing secretion. The TonB box signature appears at 26-33 (DSLVVTAN). The TBDR plug domain occupies 38–152 (PVNTVLAPTS…IGGVVNIITT (115 aa)). Cyanocob(III)alamin-binding positions include Leu83, Ser85, Asn92, and 110–111 (VT). Residues 155–616 (KDGTTLNAGI…EYTLSGSYTF (462 aa)) enclose the TBDR beta-barrel domain. The next 3 beta stranded transmembrane spans lie at 158 to 165 (TTLNAGIG), 169 to 178 (YQNYGGSTQQ), and 184 to 195 (TRVTLAGDYTYT). Ca(2+) contacts are provided by Asp199, Gln211, Asp213, and Asp215. The next 2 membrane-spanning stretches (beta stranded) occupy residues 217–227 (FMNKTLYGALE) and 232–248 (DQWTGFVRGYGYSNRTA). Ca(2+) contacts are provided by Tyr249, Asp250, and Asp263. 17 beta stranded membrane-spanning segments follow: residues 265–279 (RQLYSQTWDAGLRFN), 281–298 (DLFHSQLLSSYSHSKDYN), 311–327 (TLDEIKQYNVQWTNAVD), 330–339 (HGNIGAGVDW), 355–371 (YDLRNTGVYLTALQKFG), 373–383 (VTLEGAVRSDD), 387–402 (FGRHGTWQSSAAWEFI), 405–419 (YRFIASYGTAYKAPN), 436–445 (ESKQWEGAFE), 451–460 (VNWRVSAYRN), 475–492 (YYNVGKARIKGVEATASF), 496–511 (PLTHTLGYDYVDARNA), 519–531 (RRAKQQVKYQLDT), 537–552 (DWSLTYHYLGTRYDTD), 560–574 (NVKLGGVSLWDVAVS), 587–598 (IANLFDKDYETA), and 604–616 (AGREYTLSGSYTF). Residue Thr311 participates in cyanocob(III)alamin binding. A cyanocob(III)alamin-binding site is contributed by Arg519. The TonB C-terminal box signature appears at 599-616 (YGYATAGREYTLSGSYTF).

This sequence belongs to the TonB-dependent receptor family. BtuB (TC 1.B.14.3.1) subfamily.

The protein resides in the cell outer membrane. Its function is as follows. Involved in the active translocation of vitamin B12 (cyanocobalamin) across the outer membrane to the periplasmic space. It derives its energy for transport by interacting with the trans-periplasmic membrane protein TonB. This Cronobacter sakazakii (strain ATCC BAA-894) (Enterobacter sakazakii) protein is Vitamin B12 transporter BtuB.